Here is a 100-residue protein sequence, read N- to C-terminus: Class II hydrophobin CU (100 aa).

Residues 1 to 25 form the signal peptide; it reads MQFSIATIALFLSSAMAAPYSGNSN. 4 disulfides stabilise this stretch: C32–C82, C42–C72, C43–C55, and C83–C94.

Belongs to the cerato-ulmin hydrophobin family. Homotetramer. Further self-assembles to form highly ordered films at water-air interfaces through intermolecular interactions.

It localises to the secreted. The protein localises to the cell wall. In terms of biological role, aerial growth, conidiation, and dispersal of filamentous fungi in the environment rely upon a capability of their secreting small amphipathic proteins called hydrophobins (HPBs) with low sequence identity. Class I can self-assemble into an outermost layer of rodlet bundles on aerial cell surfaces, conferring cellular hydrophobicity that supports fungal growth, development and dispersal; whereas Class II form highly ordered films at water-air interfaces through intermolecular interactions but contribute nothing to the rodlet structure. CU is a class II hydrophobin that is implicated in the pathogenicity of this fungus on elm trees. Required for hydrophobicity and adherence of the cells and acts as a parasitic fitness factor by protecting infectious propagules from desiccation. Reduces the interfacial tension of both oil-water and air-water interfaces. This is Class II hydrophobin CU from Ophiostoma ulmi (Dutch elm disease fungus).